Reading from the N-terminus, the 269-residue chain is Formamidopyrimidine-DNA glycosylase (269 aa).

Proline 2 (schiff-base intermediate with DNA) is an active-site residue. Glutamate 3 (proton donor) is an active-site residue. Lysine 57 (proton donor; for beta-elimination activity) is an active-site residue. DNA-binding residues include histidine 90, arginine 109, and lysine 150. Residues 235 to 269 (QVYGRKGEPCRVCGTPIVASKHAQRATFYCRQCQK) form an FPG-type zinc finger. The active-site Proton donor; for delta-elimination activity is the arginine 259.

It belongs to the FPG family. As to quaternary structure, monomer. Requires Zn(2+) as cofactor.

It carries out the reaction Hydrolysis of DNA containing ring-opened 7-methylguanine residues, releasing 2,6-diamino-4-hydroxy-5-(N-methyl)formamidopyrimidine.. The catalysed reaction is 2'-deoxyribonucleotide-(2'-deoxyribose 5'-phosphate)-2'-deoxyribonucleotide-DNA = a 3'-end 2'-deoxyribonucleotide-(2,3-dehydro-2,3-deoxyribose 5'-phosphate)-DNA + a 5'-end 5'-phospho-2'-deoxyribonucleoside-DNA + H(+). Functionally, involved in base excision repair of DNA damaged by oxidation or by mutagenic agents. Acts as a DNA glycosylase that recognizes and removes damaged bases. Has a preference for oxidized purines, such as 7,8-dihydro-8-oxoguanine (8-oxoG). Has AP (apurinic/apyrimidinic) lyase activity and introduces nicks in the DNA strand. Cleaves the DNA backbone by beta-delta elimination to generate a single-strand break at the site of the removed base with both 3'- and 5'-phosphates. The protein is Formamidopyrimidine-DNA glycosylase of Enterobacter sp. (strain 638).